Reading from the N-terminus, the 338-residue chain is Holliday junction branch migration complex subunit RuvB (338 aa).

The tract at residues 4-185 (EDQKILDAKP…FGIVAHMQFY (182 aa)) is large ATPase domain (RuvB-L). Residues leucine 24, arginine 25, glycine 66, lysine 69, threonine 70, threonine 71, 132 to 134 (EDF), arginine 175, tyrosine 185, and arginine 222 each bind ATP. Threonine 70 contacts Mg(2+). The tract at residues 186 to 256 (PVSDLKLIAK…IVDNALNKLH (71 aa)) is small ATPAse domain (RuvB-S). The interval 259 to 338 (ARGLDETDLK…LQIPYQTGLS (80 aa)) is head domain (RuvB-H). 2 residues coordinate DNA: arginine 314 and arginine 319.

The protein belongs to the RuvB family. As to quaternary structure, homohexamer. Forms an RuvA(8)-RuvB(12)-Holliday junction (HJ) complex. HJ DNA is sandwiched between 2 RuvA tetramers; dsDNA enters through RuvA and exits via RuvB. An RuvB hexamer assembles on each DNA strand where it exits the tetramer. Each RuvB hexamer is contacted by two RuvA subunits (via domain III) on 2 adjacent RuvB subunits; this complex drives branch migration. In the full resolvosome a probable DNA-RuvA(4)-RuvB(12)-RuvC(2) complex forms which resolves the HJ.

The protein resides in the cytoplasm. The catalysed reaction is ATP + H2O = ADP + phosphate + H(+). In terms of biological role, the RuvA-RuvB-RuvC complex processes Holliday junction (HJ) DNA during genetic recombination and DNA repair, while the RuvA-RuvB complex plays an important role in the rescue of blocked DNA replication forks via replication fork reversal (RFR). RuvA specifically binds to HJ cruciform DNA, conferring on it an open structure. The RuvB hexamer acts as an ATP-dependent pump, pulling dsDNA into and through the RuvAB complex. RuvB forms 2 homohexamers on either side of HJ DNA bound by 1 or 2 RuvA tetramers; 4 subunits per hexamer contact DNA at a time. Coordinated motions by a converter formed by DNA-disengaged RuvB subunits stimulates ATP hydrolysis and nucleotide exchange. Immobilization of the converter enables RuvB to convert the ATP-contained energy into a lever motion, pulling 2 nucleotides of DNA out of the RuvA tetramer per ATP hydrolyzed, thus driving DNA branch migration. The RuvB motors rotate together with the DNA substrate, which together with the progressing nucleotide cycle form the mechanistic basis for DNA recombination by continuous HJ branch migration. Branch migration allows RuvC to scan DNA until it finds its consensus sequence, where it cleaves and resolves cruciform DNA. This chain is Holliday junction branch migration complex subunit RuvB, found in Oenococcus oeni (strain ATCC BAA-331 / PSU-1).